The chain runs to 170 residues: 3-hydroxyacyl-[acyl-carrier-protein] dehydratase FabZ (170 aa).

Residue H66 is part of the active site.

The protein belongs to the thioester dehydratase family. FabZ subfamily.

Its subcellular location is the cytoplasm. It catalyses the reaction a (3R)-hydroxyacyl-[ACP] = a (2E)-enoyl-[ACP] + H2O. Functionally, involved in unsaturated fatty acids biosynthesis. Catalyzes the dehydration of short chain beta-hydroxyacyl-ACPs and long chain saturated and unsaturated beta-hydroxyacyl-ACPs. This chain is 3-hydroxyacyl-[acyl-carrier-protein] dehydratase FabZ, found in Granulibacter bethesdensis (strain ATCC BAA-1260 / CGDNIH1).